A 154-amino-acid polypeptide reads, in one-letter code: 6,7-dimethyl-8-ribityllumazine synthase (154 aa).

5-amino-6-(D-ribitylamino)uracil is bound by residues phenylalanine 23, alanine 57–glutamate 59, and alanine 81–isoleucine 83. Glycine 86–threonine 87 contributes to the (2S)-2-hydroxy-3-oxobutyl phosphate binding site. The active-site Proton donor is histidine 89. A 5-amino-6-(D-ribitylamino)uracil-binding site is contributed by phenylalanine 114. Arginine 128 lines the (2S)-2-hydroxy-3-oxobutyl phosphate pocket.

Belongs to the DMRL synthase family. In terms of assembly, forms an icosahedral capsid composed of 60 subunits, arranged as a dodecamer of pentamers.

It carries out the reaction (2S)-2-hydroxy-3-oxobutyl phosphate + 5-amino-6-(D-ribitylamino)uracil = 6,7-dimethyl-8-(1-D-ribityl)lumazine + phosphate + 2 H2O + H(+). Its pathway is cofactor biosynthesis; riboflavin biosynthesis; riboflavin from 2-hydroxy-3-oxobutyl phosphate and 5-amino-6-(D-ribitylamino)uracil: step 1/2. In terms of biological role, catalyzes the formation of 6,7-dimethyl-8-ribityllumazine by condensation of 5-amino-6-(D-ribitylamino)uracil with 3,4-dihydroxy-2-butanone 4-phosphate. This is the penultimate step in the biosynthesis of riboflavin. The protein is 6,7-dimethyl-8-ribityllumazine synthase of Acidithiobacillus ferrooxidans (strain ATCC 23270 / DSM 14882 / CIP 104768 / NCIMB 8455) (Ferrobacillus ferrooxidans (strain ATCC 23270)).